The primary structure comprises 369 residues: Endo-1,4-beta-xylanase A (369 aa).

The signal sequence occupies residues 1 to 20 (MRKLTQFCLGLMLLPIAAVA). The region spanning 21–367 (QNQPTMKDVL…KPVVKEIIKL (347 aa)) is the GH10 domain. Glu156 acts as the Proton donor in catalysis. Residue Glu261 is the Nucleophile of the active site.

This sequence belongs to the glycosyl hydrolase 10 (cellulase F) family.

It carries out the reaction Endohydrolysis of (1-&gt;4)-beta-D-xylosidic linkages in xylans.. Its pathway is glycan degradation; xylan degradation. This is Endo-1,4-beta-xylanase A (xynA) from Xylanibacter ruminicola (Prevotella ruminicola).